The chain runs to 828 residues: MKLSRRSFMKANAVAAAAAAAGLSVPGVARAVVGQQEAIKWDKAPCRFCGTGCGVLVGTQQGRIVACQGDPDAPVNRGLNCIKGYFLPKIMYGKDRLTQPMLRMKDGQYNKEGEFTPISWDQAFDVMEEKFKASLKEKGPEAIGMFGSGQWTVWEGYAAAKLFKAGFRSNNIDPNARHCMASAVVGFMRTFGMDEPMGCYDDIEQADAFVLWGSNMAEMHPILWSRITNRRLSDPNVNVAVLSTFQHRSFELADNGIVFTPQSDLVILNYIANYIIQNNAINQDFFSKYVNLRKGTTDIGYGLRPTHPLEKAAKNPGSDASEPMSFDEYKAFVAEYTLEKTAEMTGVPKDQLEQLAQLYADPKKKVISYWTMGFNQHTRGVWANNLVYNLHLLTGKISQPGCGPFSLTGQPSACGTAREVGTFSHRLPADMVVTNEKHRDICEKHWQIPTGTIPAKIGLHAVAQDRALKDGKLNVYWVMCNNNMQAGPNINEERMPGWRDPRNFVIVSDPYPTVSALAADLILPTAMWVEKEGAYGNAERRTQFWRQQIKAPGEAKSDLWQLVQFARRFKTEEVWPEDLLAQKPELRGKTLYDVLFATPAVSKFPLTDLAEDQLNDESRELGFYLQKGLFEEYAWFGRGHGHDLAPFDDYHKARGLRWPVVDGKETQWRYSEGHDPYVKAGEGYKFYGKPDGKAVIFALPFEPAAEAPDKEYDLWLSTGRVLEHWHTGSMTRRVPELHRAFPEAVLFIHPLDAKTRDLRRGDKVKVISRRGEVISVVETRGRNRPPQGLVYMPFFDAAQLVNNLTLDATDPLSKETDFKKCAVKLAKV.

A signal peptide (tat-type signal) is located at residues 1–31 (MKLSRRSFMKANAVAAAAAAAGLSVPGVARA). The region spanning 39–95 (IKWDKAPCRFCGTGCGVLVGTQQGRIVACQGDPDAPVNRGLNCIKGYFLPKIMYGKD) is the 4Fe-4S Mo/W bis-MGD-type domain. [4Fe-4S] cluster-binding residues include cysteine 46, cysteine 49, cysteine 53, and cysteine 81. Residues lysine 83, glutamine 150, asparagine 175, cysteine 179, 212 to 219 (WGSNMAEM), 243 to 247 (STFQH), 262 to 264 (QSD), methionine 372, glutamine 376, asparagine 482, 508 to 509 (SD), lysine 531, aspartate 558, and 718 to 727 (TGRVLEHWHT) each bind Mo-bis(molybdopterin guanine dinucleotide). Phenylalanine 794 is a binding site for substrate. Mo-bis(molybdopterin guanine dinucleotide) contacts are provided by asparagine 802 and lysine 819.

This sequence belongs to the prokaryotic molybdopterin-containing oxidoreductase family. NasA/NapA/NarB subfamily. Component of the periplasmic nitrate reductase NapAB complex composed of NapA and NapB. It depends on [4Fe-4S] cluster as a cofactor. The cofactor is Mo-bis(molybdopterin guanine dinucleotide). Predicted to be exported by the Tat system. The position of the signal peptide cleavage has not been experimentally proven.

It is found in the periplasm. The enzyme catalyses 2 Fe(II)-[cytochrome] + nitrate + 2 H(+) = 2 Fe(III)-[cytochrome] + nitrite + H2O. Its function is as follows. Catalytic subunit of the periplasmic nitrate reductase complex NapAB. Receives electrons from NapB and catalyzes the reduction of nitrate to nitrite. The chain is Periplasmic nitrate reductase from Citrobacter koseri (strain ATCC BAA-895 / CDC 4225-83 / SGSC4696).